A 406-amino-acid polypeptide reads, in one-letter code: Uronyl 2-sulfotransferase (406 aa).

Over Met-1–Gly-49 the chain is Cytoplasmic. A helical; Signal-anchor for type II membrane protein transmembrane segment spans residues Phe-50–Gly-70. At Pro-71–Arg-406 the chain is on the lumenal side. N-linked (GlcNAc...) asparagine glycans are attached at residues Asn-84, Asn-140, and Asn-155. Residue His-168 is part of the active site. 2 N-linked (GlcNAc...) asparagine glycosylation sites follow: Asn-173 and Asn-319. Positions Glu-387–Trp-399 are enriched in acidic residues. The interval Glu-387–Arg-406 is disordered.

The protein belongs to the sulfotransferase 3 family. Widely expressed.

The protein localises to the golgi apparatus membrane. Its function is as follows. Sulfotransferase that catalyzes the transfer of sulfate to the position 2 of uronyl residues in glycosaminoglycan chains. Has mainly activity toward iduronyl residues in dermatan sulfate, and weaker activity toward glucuronyl residues of chondroitin sulfate. Has little to no activity toward desulfated N-resulfated heparin or N-sulfoheparosan. In Homo sapiens (Human), this protein is Uronyl 2-sulfotransferase.